Consider the following 198-residue polypeptide: NAD(P)H dehydrogenase (quinone) (198 aa).

In terms of domain architecture, Flavodoxin-like spans 4–190; sequence VLVLYYSAYG…EGAKYQGAHV (187 aa). Residues 10–15 and 78–80 each bind FMN; these read SAYGHI and TRF. Tyrosine 12 is a binding site for NAD(+). Position 98 (tryptophan 98) interacts with substrate. FMN contacts are provided by residues 113–119 and histidine 134; that span reads SSATQHG.

The protein belongs to the WrbA family. The cofactor is FMN.

It carries out the reaction a quinone + NADH + H(+) = a quinol + NAD(+). The enzyme catalyses a quinone + NADPH + H(+) = a quinol + NADP(+). In Rhizobium johnstonii (strain DSM 114642 / LMG 32736 / 3841) (Rhizobium leguminosarum bv. viciae), this protein is NAD(P)H dehydrogenase (quinone).